The primary structure comprises 614 residues: uncharacterized protein (614 aa).

This is an uncharacterized protein from Lactococcus lactis subsp. cremoris (strain MG1363).